The following is a 400-amino-acid chain: Laminin subunit B (400 aa).

Laminin EGF-like domains follow at residues 1–5 (EGCKP), 6–53 (CECD…GCKS), and 54–100 (CTCN…QCIP). Intrachain disulfides connect Cys-6–Cys-18, Cys-8–Cys-25, Cys-27–Cys-36, Cys-39–Cys-51, Cys-54–Cys-66, Cys-56–Cys-73, Cys-75–Cys-84, and Cys-87–Cys-98. The domain II and I stretch occupies residues 101–400 (CGECFDNWDK…AEAKNNAHEA (300 aa)). The stretch at 140–235 (KEFEELEQVL…RENALEIQEQ (96 aa)) forms a coiled coil. Asn-160, Asn-175, Asn-216, Asn-266, Asn-283, Asn-310, and Asn-356 each carry an N-linked (GlcNAc...) asparagine glycan. Positions 353–400 (EAKNTSRKAEELIKSKYRSTSSTLSELENSNKQCKQATAEAKNNAHEA) form a coiled coil. Positions 369–400 (YRSTSSTLSELENSNKQCKQATAEAKNNAHEA) are disordered. Residues 371–383 (STSSTLSELENSN) show a composition bias toward low complexity.

Laminin is a complex glycoprotein, consisting of three different polypeptide chains (alpha, beta, gamma), which are bound to each other by disulfide bonds into a cross-shaped molecule comprising one long and three short arms with globules at each end. Individual glial and muscle cells.

Its subcellular location is the secreted. The protein localises to the extracellular space. It localises to the extracellular matrix. Binding to cells via a high affinity receptor, laminin is thought to mediate the attachment, migration and organization of cells into tissues during embryonic development by interacting with other extracellular matrix components. This chain is Laminin subunit B, found in Hirudo medicinalis (Medicinal leech).